The chain runs to 174 residues: Co-chaperone protein HscB homolog (174 aa).

Positions 2–74 (NYFELFKFPP…IRRAEHMLSL (73 aa)) constitute a J domain.

It belongs to the HscB family. Interacts with HscA and stimulates its ATPase activity.

Its function is as follows. Co-chaperone involved in the maturation of iron-sulfur cluster-containing proteins. Seems to help targeting proteins to be folded toward HscA. This Shewanella oneidensis (strain ATCC 700550 / JCM 31522 / CIP 106686 / LMG 19005 / NCIMB 14063 / MR-1) protein is Co-chaperone protein HscB homolog.